Here is a 419-residue protein sequence, read N- to C-terminus: O-methyltransferase gsfB (419 aa).

S-adenosyl-L-methionine-binding positions include 255–256 (GG), D278, 300–301 (DF), and R316. The active-site Proton acceptor is the H320.

It belongs to the class I-like SAM-binding methyltransferase superfamily. Cation-independent O-methyltransferase family.

The enzyme catalyses 2-(2,4-dihydroxy-6-oxidobenzoyl)-5-hydroxy-3-methylbenzenolate + S-adenosyl-L-methionine = griseophenone D + S-adenosyl-L-homocysteine + H(+). The protein operates within secondary metabolite biosynthesis; terpenoid biosynthesis. In terms of biological role, O-methyltransferase; part of the gene cluster that mediates the biosynthesis of griseofulvin, an important antifungal drug that has been in use for a long time for treating dermatophyte infections. The first step of the pathway is the formation of the heptaketide backbone by gsfA which is initiated by priming with acetyl-CoA, followed by sequential condensations of 6 malonyl-CoA units. The resulting benzophenone can undergo a spontaneous dehydration to form norlichexanthone. However, the true precursor for the griseofulvin biosynthesis is not norlichexanthone, but the heptaketide benzophenone that is O-methylated at 3-OH by gsfB to produce griseophenone D which is further methylated at 9-OH by gsfC to yield griseophenone C. Griseophenone C is then substrate of halogenase gsfI which is responsible for the regio-specific chlorination at the C13 position to form griseophenone B. The cytochrome P450 gsfF catalyzes the coupling of orcinol and phloroglucinol rings in griseophenone B to form desmethyl-dehydrogriseofulvin A which is further methylated at 5-OH by gsfD to yield dehydrogriseofulvin. Finally, gsfE performs stereospecific reduction of enone 18 of dehydrogriseofulvin to afford the final product griseofulvin. In Penicillium aethiopicum, this protein is O-methyltransferase gsfB.